An 863-amino-acid chain; its full sequence is Transforming growth factor-beta receptor-associated protein 1 homolog (863 aa).

Positions Arg-23 to Val-297 constitute a CNH domain. The CHCR repeat unit spans residues Arg-564–Val-729.

This sequence belongs to the TRAP1 family. As to quaternary structure, component of the putative class C core vacuole/endosome tethering (CORVET) complex.

Its subcellular location is the cytoplasm. It localises to the early endosome. Its function is as follows. Plays a role in the TGF-beta signaling pathway. Plays a role in vesicle-mediated protein trafficking of the endocytic membrane transport pathway. Believed to act as a component of the putative CORVET endosomal tethering complexes which is proposed to be involved in the Rab5-to-Rab7 endosome conversion probably implicating MON1A/B, and via binding SNAREs and SNARE complexes to mediate tethering and docking events during SNARE-mediated membrane fusion. The CORVET complex is proposed to function as a Rab5 effector to mediate early endosome fusion probably in specific endosome subpopulations. The sequence is that of Transforming growth factor-beta receptor-associated protein 1 homolog (tgfbrap1) from Danio rerio (Zebrafish).